Reading from the N-terminus, the 496-residue chain is Glycerol kinase (496 aa).

Thr-14 provides a ligand contact to ADP. ATP is bound by residues Thr-14 and Thr-15. Thr-14 provides a ligand contact to sn-glycerol 3-phosphate. Sn-glycerol 3-phosphate-binding residues include Arg-84, Glu-85, Tyr-136, and Asp-246. Residues Arg-84, Glu-85, Tyr-136, Asp-246, and Gln-247 each coordinate glycerol. Residues Thr-268 and Gly-313 each contribute to the ADP site. ATP is bound by residues Thr-268, Gly-313, Gln-317, and Gly-414. ADP-binding residues include Gly-414 and Asn-418.

It belongs to the FGGY kinase family.

It carries out the reaction glycerol + ATP = sn-glycerol 3-phosphate + ADP + H(+). The protein operates within polyol metabolism; glycerol degradation via glycerol kinase pathway; sn-glycerol 3-phosphate from glycerol: step 1/1. Inhibited by fructose 1,6-bisphosphate (FBP). Key enzyme in the regulation of glycerol uptake and metabolism. Catalyzes the phosphorylation of glycerol to yield sn-glycerol 3-phosphate. This Myxococcus xanthus (strain DK1622) protein is Glycerol kinase.